A 320-amino-acid polypeptide reads, in one-letter code: MQNRNTFSWVKEEMTRFISVSIMIYVITRTSISNAYPIFAQQGYENPREATGRIVCANCHLANKPVDIEVPQAVLPDTVFEAVVRIPYDMQLKQVLANGKKGALNVGAVLILPEGFELAPPDRISPELKEKMGNLSFQSYRPNKRNILVVGPVPGQKYSEIVFPILSPDPATKKDVHFLKYPIYVGGNRGRGQIYPDGSKSNNTVYNATAAGIVSRIVRKEKGGYEISIADASDGRQVVDIIPPGPELLVSEGESIKLDQPLTSNPNVGGFGQGDAEIVLQDPLRVQGLLFFLASVILAQIFLVLKKKQFEKVQLSEMNF.

A signal peptide spans 1-35 (MQNRNTFSWVKEEMTRFISVSIMIYVITRTSISNA). The heme site is built by Tyr36, Cys56, Cys59, and His60. The chain crosses the membrane as a helical span at residues 286 to 306 (VQGLLFFLASVILAQIFLVLK).

The protein belongs to the cytochrome f family. As to quaternary structure, the 4 large subunits of the cytochrome b6-f complex are cytochrome b6, subunit IV (17 kDa polypeptide, petD), cytochrome f and the Rieske protein, while the 4 small subunits are PetG, PetL, PetM and PetN. The complex functions as a dimer. Requires heme as cofactor.

The protein resides in the plastid. It is found in the chloroplast thylakoid membrane. Component of the cytochrome b6-f complex, which mediates electron transfer between photosystem II (PSII) and photosystem I (PSI), cyclic electron flow around PSI, and state transitions. The protein is Cytochrome f of Calycanthus floridus var. glaucus (Eastern sweetshrub).